The sequence spans 340 residues: Putative transport protein AF_1800 (340 aa).

Helical transmembrane passes span 7-27 (LVLLLSILVVLALTFYFFTPL), 57-77 (SVIATAIVILPISVLMFYGLI), 140-160 (TLLILNFFISIVVCFYALADM), 193-213 (LWFGNFVVAILIGLVSLPFFL), 225-245 (GLMFLAALIPIFAEWMIILPV), 260-280 (FLLIGVVFLYVLPELILRPYF), and 290-310 (LVLMLAFIGGGLVGGISGFFI).

Belongs to the autoinducer-2 exporter (AI-2E) (TC 2.A.86) family.

The protein localises to the cell membrane. In Archaeoglobus fulgidus (strain ATCC 49558 / DSM 4304 / JCM 9628 / NBRC 100126 / VC-16), this protein is Putative transport protein AF_1800.